The sequence spans 341 residues: Terpene synthase 9 (341 aa).

The DDxx(x)D/E motif motif lies at 81 to 86 (DDILDS). The short motif at 222–230 (NDMASYCKE) is the NDxxSxxxD/E motif element.

It belongs to the terpene synthase family.

The enzyme catalyses (2E,6E)-farnesyl diphosphate = (1S,2S,4R)-beta-elemene + diphosphate. It carries out the reaction (2E,6E)-farnesyl diphosphate = germacrene D + diphosphate. Terpene synthase that converts its substrate farnesyl diphosphate (FPP) into the sesquiterpenes beta-elemene, germacrene D and a yet unidentified sesquiterpene. The protein is Terpene synthase 9 of Dictyostelium purpureum (Slime mold).